A 379-amino-acid polypeptide reads, in one-letter code: Cytochrome b (379 aa).

The next 4 membrane-spanning stretches (helical) occupy residues 32–52 (FGSLLGLCLATQILTGLFLAM), 76–97 (WLIRNMHANGASFFFICIYMHI), 112–132 (WNVGVILLLLVMMTAFVGYVL), and 177–197 (FFAFHFLFPFVIAAVTVIHLL). Heme b contacts are provided by H82 and H96. Residues H181 and H195 each contribute to the heme b site. A ubiquinone is bound at residue H200. Transmembrane regions (helical) follow at residues 225-245 (YKDLLGFIIMMVALTSLALFS), 287-307 (LGGVLALLASILVLMLVPFLH), 319-339 (LTQILFWTFVANVIILTWIGG), and 346-366 (FIIIGQVASFLYFLLLLVLSP).

It belongs to the cytochrome b family. As to quaternary structure, the cytochrome bc1 complex contains 3 respiratory subunits (MT-CYB, CYC1 and UQCRFS1), 2 core proteins (UQCRC1 and UQCRC2) and probably 6 low-molecular weight proteins. The cofactor is heme b.

It is found in the mitochondrion inner membrane. Its function is as follows. Component of the ubiquinol-cytochrome c reductase complex (complex III or cytochrome b-c1 complex) that is part of the mitochondrial respiratory chain. The b-c1 complex mediates electron transfer from ubiquinol to cytochrome c. Contributes to the generation of a proton gradient across the mitochondrial membrane that is then used for ATP synthesis. The chain is Cytochrome b (mt-cyb) from Chlorophthalmus agassizi (Shortnose greeneye).